Here is a 599-residue protein sequence, read N- to C-terminus: Spermatogenesis-associated protein 7 (599 aa).

Residues 163–205 form a disordered region; it reads KSSKVITNGPEKNSSSSPSSVDYAASGPRKLSSGALYGRRPRS. The span at 166–175 shows a compositional bias: polar residues; it reads KVITNGPEKN.

In terms of assembly, found in a complex with CFAP410, NEK1 and SPATA7. Interacts with NEK1. Interacts with RPGRIP1. Interacts with RPGR. Interacts with NPHP4. Interacts with NPHP1. Interacts with AHI1.

It localises to the cytoplasm. Its subcellular location is the cytoskeleton. It is found in the cilium axoneme. The protein resides in the cilium basal body. The protein localises to the cell projection. It localises to the cilium. Its subcellular location is the photoreceptor outer segment. Its function is as follows. Involved in the maintenance of both rod and cone photoreceptor cells. It is required for recruitment and proper localization of RPGRIP1 to the photoreceptor connecting cilium (CC), as well as photoreceptor-specific localization of proximal CC proteins at the distal CC. Maintenance of protein localization at the photoreceptor-specific distal CC is essential for normal microtubule stability and to prevent photoreceptor degeneration. This is Spermatogenesis-associated protein 7 (SPATA7) from Homo sapiens (Human).